Consider the following 56-residue polypeptide: UPF0391 membrane protein Noc_0484 (56 aa).

Helical transmembrane passes span Val6–Ile26 and Glu29–Gly49.

Belongs to the UPF0391 family.

It localises to the cell membrane. The sequence is that of UPF0391 membrane protein Noc_0484 from Nitrosococcus oceani (strain ATCC 19707 / BCRC 17464 / JCM 30415 / NCIMB 11848 / C-107).